A 56-amino-acid polypeptide reads, in one-letter code: Large ribosomal subunit protein bL32 (56 aa).

Residues 1 to 16 show a composition bias toward basic residues; the sequence is MAVQKNKKSRSKRGMR. The interval 1-36 is disordered; that stretch reads MAVQKNKKSRSKRGMRRSHDSLSTPQLSVDSTSGEL. Residues 21 to 34 are compositionally biased toward polar residues; sequence SLSTPQLSVDSTSG.

This sequence belongs to the bacterial ribosomal protein bL32 family.

This is Large ribosomal subunit protein bL32 from Shewanella sediminis (strain HAW-EB3).